The primary structure comprises 76 residues: MTDVESTYADFIASGRTGRRNALHDILVSSPGGNSSELALKLSELDINKAEGEGDAQRNPSEQTGEAQGEAAKQES.

Residue threonine 2 is modified to Blocked amino end (Thr). Residues 49-76 are disordered; it reads KAEGEGDAQRNPSEQTGEAQGEAAKQES.

Belongs to the PKI family.

Its function is as follows. Extremely potent competitive inhibitor of cAMP-dependent protein kinase activity, this protein interacts with the catalytic subunit of the enzyme after the cAMP-induced dissociation of its regulatory chains. This Gallus gallus (Chicken) protein is cAMP-dependent protein kinase inhibitor alpha (PKIA).